Consider the following 919-residue polypeptide: Synphilin-1 (919 aa).

Disordered regions lie at residues 80–99 (SPLK…DQKN), 108–140 (GGES…STSL), and 287–313 (SSAA…EERS). Over residues 299 to 308 (SGLNRTSSQG) the composition is skewed to polar residues. ANK repeat units lie at residues 349 to 380 (NGNN…CLNE), 384 to 413 (EKLT…AIAE), 419 to 448 (DFPS…EQGI), and 456 to 485 (DGNS…NVTM). Positions 515-552 (CMSLASQVVKLTKQLKEQTVERVTLQNQLQQFLEAQKS) form a coiled coil. Disordered regions lie at residues 549 to 615 (AQKS…KDED), 666 to 713 (RLRQ…SMDS), and 728 to 919 (SGGR…NKAA). Over residues 555 to 571 (KSLPSSPSSPSSPASRK) the composition is skewed to low complexity. One copy of the ANK 5 repeat lies at 603–632 (ASSRARPKAKDEDSDKILRQLLGKEISENV). A compositionally biased stretch (low complexity) spans 667 to 685 (LRQLMQRSLSESDTDSNNS). Residues 686 to 700 (EDPKTTPVRKADRPR) are compositionally biased toward basic and acidic residues. The stretch at 699–729 (PRPQPIVESVESMDSAESLHLMIKKHTLASG) is one ANK 6 repeat. Over residues 774-785 (PSGDPQQPSPDS) the composition is skewed to low complexity. Residues 833 to 842 (NGEKDKDKGR) show a composition bias toward basic and acidic residues. A compositionally biased stretch (polar residues) spans 844–854 (LQRTSTSNESG). Over residues 874-886 (NQNNNNNYQAANQ) the composition is skewed to low complexity.

As to quaternary structure, homodimer. Heterodimer of isoform 1 and isoform 2. Interacts with SIAH1, SIAH2, SNCA, RNF19A and PRKN. Isoform 2 has a strong tendency to form aggregates and can sequester isoform 1. Post-translationally, ubiquitinated; mediated by SIAH1, SIAH2 or RNF19A and leading to its subsequent proteasomal degradation. In the absence of proteasomal degradation, ubiquitinated SNCAIP accumulates in cytoplasmic inclusion bodies. Isoform 2 is subject to limited ubiquitination that does not lead to proteasomal degradation. As to expression, detected in brain (at protein level). Widely expressed, with highest levels in brain, heart and placenta.

The protein resides in the cytoplasm. In terms of biological role, isoform 2 inhibits the ubiquitin ligase activity of SIAH1 and inhibits proteasomal degradation of target proteins. Isoform 2 inhibits autoubiquitination and proteasomal degradation of SIAH1, and thereby increases cellular levels of SIAH. Isoform 2 modulates SNCA monoubiquitination by SIAH1. The polypeptide is Synphilin-1 (SNCAIP) (Homo sapiens (Human)).